Reading from the N-terminus, the 209-residue chain is Uracil phosphoribosyltransferase (209 aa).

Residues R79, R104, and 131 to 139 (DPMLATGGS) contribute to the 5-phospho-alpha-D-ribose 1-diphosphate site. Residues I194 and 199 to 201 (GDA) each bind uracil. D200 is a 5-phospho-alpha-D-ribose 1-diphosphate binding site.

The protein belongs to the UPRTase family. Requires Mg(2+) as cofactor.

It catalyses the reaction UMP + diphosphate = 5-phospho-alpha-D-ribose 1-diphosphate + uracil. It participates in pyrimidine metabolism; UMP biosynthesis via salvage pathway; UMP from uracil: step 1/1. With respect to regulation, allosterically activated by GTP. In terms of biological role, catalyzes the conversion of uracil and 5-phospho-alpha-D-ribose 1-diphosphate (PRPP) to UMP and diphosphate. The sequence is that of Uracil phosphoribosyltransferase from Listeria innocua serovar 6a (strain ATCC BAA-680 / CLIP 11262).